The following is an 84-amino-acid chain: U4-theraphotoxin-Hhn1a (84 aa).

The first 22 residues, 1 to 22 (MKVTLIAILTCAAVLVLHTTAA), serve as a signal peptide directing secretion. Residues 23 to 47 (EELEESQLMEVGMPDTELEAVDEER) constitute a propeptide that is removed on maturation. 3 cysteine pairs are disulfide-bonded: Cys51–Cys65, Cys55–Cys76, and Cys70–Cys81.

It belongs to the neurotoxin 12 (Hwtx-2) family. 02 (Hwtx-2) subfamily. As to expression, expressed by the venom gland.

Its subcellular location is the secreted. In terms of biological role, postsynaptic neurotoxin. This Cyriopagopus hainanus (Chinese bird spider) protein is U4-theraphotoxin-Hhn1a.